The sequence spans 293 residues: N-acetylneuraminate lyase (293 aa).

The aceneuramate site is built by Ser48 and Ser49. Catalysis depends on Tyr137, which acts as the Proton donor. The active-site Schiff-base intermediate with substrate is Lys165. The aceneuramate site is built by Thr167, Gly189, Asp191, Glu192, and Ser208.

This sequence belongs to the DapA family. NanA subfamily. As to quaternary structure, homotetramer.

Its subcellular location is the cytoplasm. The enzyme catalyses aceneuramate = aldehydo-N-acetyl-D-mannosamine + pyruvate. The protein operates within amino-sugar metabolism; N-acetylneuraminate degradation; D-fructose 6-phosphate from N-acetylneuraminate: step 1/5. Catalyzes the reversible aldol cleavage of N-acetylneuraminic acid (sialic acid; Neu5Ac) to form pyruvate and N-acetylmannosamine (ManNAc) via a Schiff base intermediate. The polypeptide is N-acetylneuraminate lyase (Staphylococcus aureus (strain bovine RF122 / ET3-1)).